Here is a 228-residue protein sequence, read N- to C-terminus: DNA mismatch repair protein MutH (228 aa).

It belongs to the MutH family.

The protein localises to the cytoplasm. Functionally, sequence-specific endonuclease that cleaves unmethylated GATC sequences. It is involved in DNA mismatch repair. In Photorhabdus laumondii subsp. laumondii (strain DSM 15139 / CIP 105565 / TT01) (Photorhabdus luminescens subsp. laumondii), this protein is DNA mismatch repair protein MutH.